Consider the following 416-residue polypeptide: Glutamate dehydrogenase (416 aa).

The active site involves Lys105.

This sequence belongs to the Glu/Leu/Phe/Val dehydrogenases family. Homohexamer.

It catalyses the reaction L-glutamate + NAD(+) + H2O = 2-oxoglutarate + NH4(+) + NADH + H(+). The enzyme catalyses L-glutamate + NADP(+) + H2O = 2-oxoglutarate + NH4(+) + NADPH + H(+). The sequence is that of Glutamate dehydrogenase (gdhA) from Thermotoga maritima (strain ATCC 43589 / DSM 3109 / JCM 10099 / NBRC 100826 / MSB8).